The chain runs to 210 residues: MMEVKLWNDKREREMYENFAELFAIIKATEKLEKAYIRDLINPSEYESECQKLIVHFKTLSATLKDTVPNIERFADTYKMDCPAALYRLVTSGLPATVEHRATVAASTSNSASIVAECVQNFITSMDSLKLNMVAVDQVYPLLSDLSASLNKLSILPPDFEGKTKMKEWLSRLSKMGAADELTEQQSRQLHFDLESSYNSFMAALPKAGN.

The VPS28 N-terminal domain maps to 1 to 99 (MMEVKLWNDK…VTSGLPATVE (99 aa)). Positions 109–205 (SNSASIVAEC…SSYNSFMAAL (97 aa)) constitute a VPS28 C-terminal domain.

It belongs to the VPS28 family. As to quaternary structure, component of the endosomal sorting required for transport complex I (ESCRT-I), composed of ELC, VPS28 and VPS37. Interacts with ELC.

The protein localises to the endosome. In terms of biological role, component of the ESCRT-I complex (endosomal sorting complex required for transport I), a regulator of vesicular trafficking process. Required for the sorting of endocytic ubiquitinated cargos into multivesicular bodies (MVBs). Mediates the association to the ESCRT-0 complex. This is Vacuolar protein sorting-associated protein 28 homolog 2 (VPS28-2) from Arabidopsis thaliana (Mouse-ear cress).